The sequence spans 448 residues: Tubulin beta-2 chain (448 aa).

Residues Q11, E69, S138, G142, T143, G144, N204, and N226 each coordinate GTP. E69 lines the Mg(2+) pocket. The interval 421-448 (EYQQYQDATADEDGEYEDELDGQEEEDM) is disordered. Over residues 429 to 448 (TADEDGEYEDELDGQEEEDM) the composition is skewed to acidic residues.

It belongs to the tubulin family. Dimer of alpha and beta chains. A typical microtubule is a hollow water-filled tube with an outer diameter of 25 nm and an inner diameter of 15 nM. Alpha-beta heterodimers associate head-to-tail to form protofilaments running lengthwise along the microtubule wall with the beta-tubulin subunit facing the microtubule plus end conferring a structural polarity. Microtubules usually have 13 protofilaments but different protofilament numbers can be found in some organisms and specialized cells. It depends on Mg(2+) as a cofactor.

The protein localises to the cytoplasm. Its subcellular location is the cytoskeleton. Functionally, tubulin is the major constituent of microtubules, a cylinder consisting of laterally associated linear protofilaments composed of alpha- and beta-tubulin heterodimers. Microtubules grow by the addition of GTP-tubulin dimers to the microtubule end, where a stabilizing cap forms. Below the cap, tubulin dimers are in GDP-bound state, owing to GTPase activity of alpha-tubulin. The protein is Tubulin beta-2 chain (TUBB2) of Eleusine indica (Goosegrass).